A 424-amino-acid chain; its full sequence is Tyrosine--tRNA ligase (424 aa).

Tyrosine 37 contributes to the L-tyrosine binding site. The short motif at 42 to 51 (PTADSLHLGH) is the 'HIGH' region element. Lysine 144 carries the N6-acetyllysine modification. Tyrosine 175 and glutamine 179 together coordinate L-tyrosine. The 'KMSKS' region signature appears at 235-239 (KFGKT). An ATP-binding site is contributed by lysine 238. The 58-residue stretch at 357–414 (ADLMQALVDSELQPSRGQARKTIASNAVTINGEKQSDPEYFFKEEDRLFGRFTLLRRG) folds into the S4 RNA-binding domain.

It belongs to the class-I aminoacyl-tRNA synthetase family. TyrS type 1 subfamily. As to quaternary structure, homodimer.

The protein localises to the cytoplasm. It catalyses the reaction tRNA(Tyr) + L-tyrosine + ATP = L-tyrosyl-tRNA(Tyr) + AMP + diphosphate + H(+). Functionally, catalyzes the attachment of tyrosine to tRNA(Tyr) in a two-step reaction: tyrosine is first activated by ATP to form Tyr-AMP and then transferred to the acceptor end of tRNA(Tyr). In Escherichia fergusonii (strain ATCC 35469 / DSM 13698 / CCUG 18766 / IAM 14443 / JCM 21226 / LMG 7866 / NBRC 102419 / NCTC 12128 / CDC 0568-73), this protein is Tyrosine--tRNA ligase.